The following is a 1642-amino-acid chain: Cholesterol transporter ABCA5 (1642 aa).

Residues 32–52 (SVQEILFPLFFLFWLILISMM) form a helical membrane-spanning segment. Residues Asn-86 and Asn-190 are each glycosylated (N-linked (GlcNAc...) asparagine). 6 consecutive transmembrane segments (helical) span residues 220 to 240 (VILI…AIHI), 264 to 284 (LSWV…MAVI), 297 to 317 (IVIF…ALML), 327 to 347 (VGVV…LIVL), 355 to 375 (LVWL…AQVM), and 396 to 416 (LIIT…LAVY). Residue Asn-458 is glycosylated (N-linked (GlcNAc...) asparagine). The ABC transporter 1 domain maps to 478 to 713 (IRISGIQKAY…WGIGYRLSMY (236 aa)). Residue 514–521 (GHSGTGKS) coordinates ATP. The helical transmembrane segment at 866 to 886 (LLLLLIFFAVQIFMFLVHHSF) threads the bilayer. Asn-919 carries an N-linked (GlcNAc...) asparagine glycan. Residues 967 to 987 (VFTAVFNSTMVYSLPVMMNII) traverse the membrane as a helical segment. Asn-996 carries an N-linked (GlcNAc...) asparagine glycan. 6 helical membrane passes run 1021 to 1041 (LYFQ…YFAM), 1071 to 1091 (VVDI…LFAF), 1102 to 1122 (FLAV…FTYI), 1139 to 1159 (FIYS…FFLG), 1164 to 1184 (AVFH…GCLI), and 1207 to 1227 (LLVA…LLQH). In terms of domain architecture, ABC transporter 2 spans 1290–1533 (IMVYNLHKEY…FGKGYFLEIK (244 aa)). An ATP-binding site is contributed by 1333–1340 (GPNGAGKS).

This sequence belongs to the ABC transporter superfamily. ABCA family. Post-translationally, N-glycosylated. In terms of tissue distribution, expressed in testis, epididymis, lung and brain.

The protein localises to the lysosome membrane. The protein resides in the late endosome membrane. Its subcellular location is the golgi apparatus membrane. It is found in the cell membrane. The catalysed reaction is cholesterol(in) + ATP + H2O = cholesterol(out) + ADP + phosphate + H(+). Cholesterol efflux transporter in macrophages that is responsible for APOAI/high-density lipoproteins (HDL) formation at the plasma membrane under high cholesterol levels and participates in reverse cholesterol transport. May play a role in the processing of autolysosomes. The chain is Cholesterol transporter ABCA5 from Rattus norvegicus (Rat).